The following is a 396-amino-acid chain: MGIKHLYQLIQEHSPDAIKTGEIKNQFGRKVAIDASMSIYSFLIAVRSDGQQLMSETGETTSHLMGLFYRTLRMVDNGIKPLYVFDGAPPKLKSGELAKRFQRKSEAHAAAEEAKETGTAEDVEKFSRRTVRVTREHNEECRRLLKLMGIPFIIAPTEAEAQCATLARGGKVYAAASEDMDTLTFNTPILLRHLTFSEQRKEPILEIHLDKVLEGLEMEREQPQFIDLCILLGCDYLDPIKGIGPSTALKLIRDHKTLEGVVAHIQSDQKKLTLPEDWPFADARQLFLEPDVCPADAPECDFKWEAPDIEGLVKFLVEEKHFNEDRVRNGAAKLQKNMKSAQQSRLEGFFKPVERTPEEKASLKRKADEKLSEKKKKQKEEAKAKKQAKSKPRTAG.

The interval 1–104 is N-domain; it reads MGIKHLYQLI…GELAKRFQRK (104 aa). Mg(2+) is bound at residue Asp34. DNA is bound by residues Arg47 and Arg70. Positions 86, 158, 160, 179, and 181 each coordinate Mg(2+). An I-domain region spans residues 122-255; sequence DVEKFSRRTV…STALKLIRDH (134 aa). A DNA-binding site is contributed by Glu158. Residues Gly233 and Asp235 each contribute to the DNA site. Asp235 serves as a coordination point for Mg(2+). The interval 338–396 is disordered; the sequence is MKSAQQSRLEGFFKPVERTPEEKASLKRKADEKLSEKKKKQKEEAKAKKQAKSKPRTAG. Residues 342–350 form an interaction with PCNA region; it reads QQSRLEGFF. The segment covering 352-384 has biased composition (basic and acidic residues); it reads PVERTPEEKASLKRKADEKLSEKKKKQKEEAKA. The segment covering 385–396 has biased composition (basic residues); it reads KKQAKSKPRTAG.

It belongs to the XPG/RAD2 endonuclease family. FEN1 subfamily. Interacts with PCNA. Three molecules of FEN1 bind to one PCNA trimer with each molecule binding to one PCNA monomer. PCNA stimulates the nuclease activity without altering cleavage specificity. Mg(2+) serves as cofactor. Post-translationally, phosphorylated. Phosphorylation upon DNA damage induces relocalization to the nuclear plasma.

The protein localises to the nucleus. The protein resides in the nucleolus. It localises to the nucleoplasm. Its subcellular location is the mitochondrion. Functionally, structure-specific nuclease with 5'-flap endonuclease and 5'-3' exonuclease activities involved in DNA replication and repair. During DNA replication, cleaves the 5'-overhanging flap structure that is generated by displacement synthesis when DNA polymerase encounters the 5'-end of a downstream Okazaki fragment. It enters the flap from the 5'-end and then tracks to cleave the flap base, leaving a nick for ligation. Also involved in the long patch base excision repair (LP-BER) pathway, by cleaving within the apurinic/apyrimidinic (AP) site-terminated flap. Acts as a genome stabilization factor that prevents flaps from equilibrating into structures that lead to duplications and deletions. Also possesses 5'-3' exonuclease activity on nicked or gapped double-stranded DNA, and exhibits RNase H activity. Also involved in replication and repair of rDNA and in repairing mitochondrial DNA. This Phaeosphaeria nodorum (strain SN15 / ATCC MYA-4574 / FGSC 10173) (Glume blotch fungus) protein is Flap endonuclease 1.